Here is a 192-residue protein sequence, read N- to C-terminus: Epididymal-specific lipocalin-5 (192 aa).

The N-terminal stretch at 1-26 is a signal peptide; sequence MCSVARHMESIMLFTLLGLCVGLAAG. Cys89 and Cys183 form a disulfide bridge.

This sequence belongs to the calycin superfamily. Lipocalin family. 2 different forms with differently processed N-termini exist. Epididymal fluid of the caudal and corpus regions (at protein level).

Its subcellular location is the secreted. In terms of biological role, associates with spermatozoa in the epididymal fluid but does not bind tightly to them. Binds both all-trans and 13-cis retinoic acid. May act as a retinoid carrier protein which is required for epididymal function and/or sperm maturation. In Mus musculus (Mouse), this protein is Epididymal-specific lipocalin-5.